Consider the following 348-residue polypeptide: uncharacterized protein (348 aa).

Functionally, may be involved in apoptosis regulation. This is an uncharacterized protein from Rattus norvegicus (Rat).